We begin with the raw amino-acid sequence, 402 residues long: Tryptophan synthase beta chain (402 aa).

An N6-(pyridoxal phosphate)lysine modification is found at lysine 91.

This sequence belongs to the TrpB family. As to quaternary structure, tetramer of two alpha and two beta chains. Pyridoxal 5'-phosphate serves as cofactor.

It catalyses the reaction (1S,2R)-1-C-(indol-3-yl)glycerol 3-phosphate + L-serine = D-glyceraldehyde 3-phosphate + L-tryptophan + H2O. Its pathway is amino-acid biosynthesis; L-tryptophan biosynthesis; L-tryptophan from chorismate: step 5/5. In terms of biological role, the beta subunit is responsible for the synthesis of L-tryptophan from indole and L-serine. The protein is Tryptophan synthase beta chain of Streptococcus thermophilus (strain ATCC BAA-250 / LMG 18311).